The chain runs to 247 residues: Carboxy-S-adenosyl-L-methionine synthase (247 aa).

S-adenosyl-L-methionine is bound by residues Tyr39, 64 to 66 (GCS), 89 to 90 (DN), 117 to 118 (DI), Asn132, and Arg199.

Belongs to the class I-like SAM-binding methyltransferase superfamily. Cx-SAM synthase family. Homodimer.

The catalysed reaction is prephenate + S-adenosyl-L-methionine = carboxy-S-adenosyl-L-methionine + 3-phenylpyruvate + H2O. In terms of biological role, catalyzes the conversion of S-adenosyl-L-methionine (SAM) to carboxy-S-adenosyl-L-methionine (Cx-SAM). The polypeptide is Carboxy-S-adenosyl-L-methionine synthase (Salmonella arizonae (strain ATCC BAA-731 / CDC346-86 / RSK2980)).